We begin with the raw amino-acid sequence, 453 residues long: Serine/threonine-protein phosphatase 2A regulatory subunit B'' subunit gamma (453 aa).

EF-hand domains follow at residues 273–308 (PSAL…TMTN) and 341–376 (KEPA…IQEL). Ca(2+) contacts are provided by D286, D288, N290, M292, and E297.

In terms of assembly, interacts with MCM3AP/GANP. Interacts with PPP5C, and the phosphatase 2A core enzyme composed of the PPP2CA catalytic subunit and the constant regulatory subunit PPP2R1A. Finds in a complex with ABCB1, TFPI2 and PPP2R3C; leading to the dephosphorylation of ABCB1. Ubiquitously expressed in brain and other tissues.

The protein localises to the nucleus. The protein resides in the cytoplasm. May regulate MCM3AP phosphorylation through phosphatase recruitment. May act as a negative regulator of ABCB1 expression and function through the dephosphorylation of ABCB1 by TFPI2/PPP2R3C complex. May play a role in the activation-induced cell death of B-cells. The protein is Serine/threonine-protein phosphatase 2A regulatory subunit B'' subunit gamma (PPP2R3C) of Homo sapiens (Human).